The chain runs to 380 residues: Cobalt-precorrin-5B C(1)-methyltransferase (380 aa).

The protein belongs to the CbiD family.

The catalysed reaction is Co-precorrin-5B + S-adenosyl-L-methionine = Co-precorrin-6A + S-adenosyl-L-homocysteine. It functions in the pathway cofactor biosynthesis; adenosylcobalamin biosynthesis; cob(II)yrinate a,c-diamide from sirohydrochlorin (anaerobic route): step 6/10. Catalyzes the methylation of C-1 in cobalt-precorrin-5B to form cobalt-precorrin-6A. In Methanosphaera stadtmanae (strain ATCC 43021 / DSM 3091 / JCM 11832 / MCB-3), this protein is Cobalt-precorrin-5B C(1)-methyltransferase.